A 179-amino-acid polypeptide reads, in one-letter code: MARLQEFYKEKVVGDLTAKFAYKSVMEVPRILKITLNMGLSEAVADKKIIEHAVGDLTKIAGQKPVVTKARKAIAGFKIREGYPIGCMVTLRGAHMYEFLDRFITVALPRVRDFRGVSGKAFDGRGNYNIGVKEQIIFPEIEYDKIDALRGMNISITTTAKTDDEAKALLAAFKFPFRN.

Belongs to the universal ribosomal protein uL5 family. As to quaternary structure, part of the 50S ribosomal subunit; part of the 5S rRNA/L5/L18/L25 subcomplex. Contacts the 5S rRNA and the P site tRNA. Forms a bridge to the 30S subunit in the 70S ribosome.

Its function is as follows. This is one of the proteins that bind and probably mediate the attachment of the 5S RNA into the large ribosomal subunit, where it forms part of the central protuberance. In the 70S ribosome it contacts protein S13 of the 30S subunit (bridge B1b), connecting the 2 subunits; this bridge is implicated in subunit movement. Contacts the P site tRNA; the 5S rRNA and some of its associated proteins might help stabilize positioning of ribosome-bound tRNAs. In Janthinobacterium sp. (strain Marseille) (Minibacterium massiliensis), this protein is Large ribosomal subunit protein uL5.